The chain runs to 60 residues: Three-finger toxin MS3 (60 aa).

4 disulfide bridges follow: Cys3–Cys22, Cys15–Cys39, Cys41–Cys52, and Cys53–Cys58.

Belongs to the three-finger toxin family. Short-chain subfamily. Type I alpha-neurotoxin sub-subfamily. As to expression, expressed by the venom gland.

Its subcellular location is the secreted. Its function is as follows. Produces peripheral paralysis by blocking neuromuscular transmission at the postsynaptic site. Binds to and inhibits the endogenous nicotinic acetylcholine receptors (nAChR) in human rhabdomyosarcoma TE 671 cell line with an IC(50) of 346 mM. This neurotoxin is lethal to mice by intraperitoneal injection and to zebrafish by injection at the back of the dorsolateral region. The protein is Three-finger toxin MS3 of Micrurus surinamensis (Surinam coral snake).